The sequence spans 709 residues: Acyl-coenzyme A oxidase 4 (709 aa).

Residues 1–12 (MTFTKKNVSVSQ) show a composition bias toward polar residues. The segment at 1–29 (MTFTKKNVSVSQGPDPRSSIQKERDSSKW) is disordered.

This sequence belongs to the acyl-CoA oxidase family. As to quaternary structure, homooctamer. FAD is required as a cofactor.

Its subcellular location is the peroxisome. The catalysed reaction is a 2,3-saturated acyl-CoA + O2 = a (2E)-enoyl-CoA + H2O2. It participates in lipid metabolism; peroxisomal fatty acid beta-oxidation. This is Acyl-coenzyme A oxidase 4 (POX4) from Candida tropicalis (Yeast).